Reading from the N-terminus, the 657-residue chain is Probable cobalt/nickel-exporting P-type ATPase (657 aa).

The next 5 helical transmembrane spans lie at 40–60 (WATVALLLFLAGLVAQLNGAP), 62–82 (AMWWTLYLACYLAGGWGSAWA), 101–121 (AAVGAVAIGQIFDGALLIVIF), 268–288 (LGMVAATLALIVIPLMFGADL), and 299–319 (MIVASPCAVVLATMPPLLSAI). The active-site 4-aspartylphosphate intermediate is Asp347. Mg(2+) contacts are provided by Asp543 and Asp547. A helical membrane pass occupies residues 596 to 618 (VVTVNLAIAATFIAVLVLWDLFG).

This sequence belongs to the cation transport ATPase (P-type) (TC 3.A.3) family. Type IB subfamily.

Its subcellular location is the cell membrane. Its function is as follows. Involved in heavy metal homeostasis. Probably exports nickel and cobalt ions out of the cell. This is Probable cobalt/nickel-exporting P-type ATPase (ctpD) from Mycobacterium bovis (strain ATCC BAA-935 / AF2122/97).